A 310-amino-acid chain; its full sequence is MFEHETVLKMESIEGLNIKPDGVYVDCTLGGAGHSEEIAKRLTTGQLYAFDQDDVALAHAKERLAPYEGRVTFIKSNFVHLKEELAQRGVTKVDGVLFDLGVSSPQLDEAERGFSYNYDAPLDMRMDRSRDFSAYHVVNEWSFGELARIFFTYGEEKFSKQIARKIEQARADKPIETTFELVDLIKEAIPAPARRKGGHPAKRTFQAIRIAVNDELNVFDRAVQDAIDLLAVNGRICVITFHSLEDRICKQVFKERSQHPPLPPGLPVIPKEFEPELKLITRKPIVASEGELEDNRRSRSAKLRVAEKQK.

S-adenosyl-L-methionine is bound by residues 32–34 (AGH), aspartate 51, phenylalanine 78, aspartate 99, and glutamine 106. Positions 290–310 (GELEDNRRSRSAKLRVAEKQK) are disordered.

The protein belongs to the methyltransferase superfamily. RsmH family.

The protein resides in the cytoplasm. The catalysed reaction is cytidine(1402) in 16S rRNA + S-adenosyl-L-methionine = N(4)-methylcytidine(1402) in 16S rRNA + S-adenosyl-L-homocysteine + H(+). Its function is as follows. Specifically methylates the N4 position of cytidine in position 1402 (C1402) of 16S rRNA. The sequence is that of Ribosomal RNA small subunit methyltransferase H from Exiguobacterium sp. (strain ATCC BAA-1283 / AT1b).